The primary structure comprises 204 residues: Outer-membrane lipoprotein carrier protein (204 aa).

Residues 1-21 form the signal peptide; that stretch reads MKKIAIVGALLTSFVASSVWA. A disordered region spans residues 169–204; it reads QRSSYQLKSQQNGAIDASKFTFTPPQGVTVDDQRNK. Over residues 171–181 the composition is skewed to polar residues; it reads SSYQLKSQQNG.

This sequence belongs to the LolA family. As to quaternary structure, monomer.

Its subcellular location is the periplasm. Its function is as follows. Participates in the translocation of lipoproteins from the inner membrane to the outer membrane. Only forms a complex with a lipoprotein if the residue after the N-terminal Cys is not an aspartate (The Asp acts as a targeting signal to indicate that the lipoprotein should stay in the inner membrane). This Enterobacter sp. (strain 638) protein is Outer-membrane lipoprotein carrier protein.